Reading from the N-terminus, the 402-residue chain is Acetate kinase (402 aa).

A Mg(2+)-binding site is contributed by N10. An ATP-binding site is contributed by K17. R89 lines the substrate pocket. The Proton donor/acceptor role is filled by D148. ATP-binding positions include 208–212 (HLGNG), 283–285 (DCR), and 334–338 (GIGEN). E389 contacts Mg(2+).

This sequence belongs to the acetokinase family. As to quaternary structure, homodimer. Requires Mg(2+) as cofactor. Mn(2+) is required as a cofactor.

Its subcellular location is the cytoplasm. The enzyme catalyses acetate + ATP = acetyl phosphate + ADP. Its pathway is metabolic intermediate biosynthesis; acetyl-CoA biosynthesis; acetyl-CoA from acetate: step 1/2. Functionally, catalyzes the formation of acetyl phosphate from acetate and ATP. Can also catalyze the reverse reaction. This Actinobacillus pleuropneumoniae serotype 7 (strain AP76) protein is Acetate kinase.